A 405-amino-acid polypeptide reads, in one-letter code: L-rhamnonate dehydratase (405 aa).

Substrate contacts are provided by histidine 33 and arginine 59. Mg(2+) is bound by residues aspartate 226, glutamate 252, and glutamate 280. Catalysis depends on histidine 329, which acts as the Proton acceptor. Residue glutamate 349 participates in substrate binding.

It belongs to the mandelate racemase/muconate lactonizing enzyme family. RhamD subfamily. In terms of assembly, homooctamer; tetramer of dimers. Mg(2+) serves as cofactor.

It carries out the reaction L-rhamnonate = 2-dehydro-3-deoxy-L-rhamnonate + H2O. Functionally, catalyzes the dehydration of L-rhamnonate to 2-keto-3-deoxy-L-rhamnonate (KDR). The sequence is that of L-rhamnonate dehydratase from Salmonella paratyphi A (strain AKU_12601).